A 121-amino-acid polypeptide reads, in one-letter code: Methylglyoxal synthase (121 aa).

An MGS-like domain is found at 1–121 (MMKVALIAHD…SAELFLRALN (121 aa)). Residues H9, K13, 35 to 38 (TGTT), and 55 to 56 (SG) each bind substrate. Residue D61 is the Proton donor/acceptor of the active site. Residue H88 coordinates substrate.

Belongs to the methylglyoxal synthase family.

It carries out the reaction dihydroxyacetone phosphate = methylglyoxal + phosphate. In terms of biological role, catalyzes the formation of methylglyoxal from dihydroxyacetone phosphate. In Carboxydothermus hydrogenoformans (strain ATCC BAA-161 / DSM 6008 / Z-2901), this protein is Methylglyoxal synthase.